Here is a 444-residue protein sequence, read N- to C-terminus: Glycine receptor subunit alphaZ1 (444 aa).

Residues 1–24 form the signal peptide; that stretch reads MFALGIYLWETIVFFSLAASQQAA. At 25-246 the chain is on the extracellular side; the sequence is ARKAASPMPP…RFHLERQMGY (222 aa). An N-linked (GlcNAc...) asparagine glycan is attached at Asn62. Positions 89 and 153 each coordinate glycine. Cys162 and Cys176 are oxidised to a cystine. Positions 216 and 218 each coordinate Zn(2+). An intrachain disulfide couples Cys222 to Cys233. 226–231 contacts strychnine; sequence YNTGKF. Thr228 serves as a coordination point for glycine. Position 239 (His239) interacts with Zn(2+). The helical transmembrane segment at 247 to 268 threads the bilayer; sequence YLIQMYIPSLLIVILSWVSFWI. At 269 to 273 the chain is on the cytoplasmic side; the sequence is NMDAA. The chain crosses the membrane as a helical span at residues 274-294; the sequence is PARVGLGITTVLTMTTQSSGS. Topologically, residues 295–305 are extracellular; sequence RASLPKVSYVK. A helical transmembrane segment spans residues 306-326; that stretch reads AIDIWMAVCLLFVFSALLEYA. Over 327 to 412 the chain is Cytoplasmic; that stretch reads AVNFIARQHK…FISRAKRIDT (86 aa). Residues 413–433 form a helical membrane-spanning segment; that stretch reads VSRVAFPLVFLIFNIFYWITY. Residues 434-444 are Extracellular-facing; the sequence is KIIRSEDIHKQ.

The protein belongs to the ligand-gated ion channel (TC 1.A.9) family. Glycine receptor (TC 1.A.9.3) subfamily. GLRA1 sub-subfamily. In terms of assembly, homopentamer (in vitro). Heteropentamer composed of glra1 and glrb. Both homopentamers and heteropentamers form functional ion channels. Interacts with glrb. In terms of tissue distribution, expressed in brain.

Its subcellular location is the postsynaptic cell membrane. It is found in the synapse. It localises to the perikaryon. The protein resides in the cell projection. The protein localises to the dendrite. Its subcellular location is the cell membrane. It catalyses the reaction chloride(in) = chloride(out). Activated by glycine and taurine. Inhibited by strychnine. Allosterically activated by ivermectin. Inhibited by picrotoxinin. Strychnine binding locks the channel in a closed conformation and prevents channel opening in response to extracellular glycine. Can also be activated by GABA and inhibited by bicuculline, but this requires heterologous expression in human cells. Subunit of heteromeric glycine-gated chloride channels. Plays an important role in the down-regulation of neuronal excitability. Contributes to the generation of inhibitory postsynaptic currents. Channel activity is potentiated by ethanol. The polypeptide is Glycine receptor subunit alphaZ1 (glra1) (Danio rerio (Zebrafish)).